The sequence spans 174 residues: Co-chaperone protein HscB (174 aa).

A J domain is found at Asp-2–Leu-74.

It belongs to the HscB family. As to quaternary structure, interacts with HscA and stimulates its ATPase activity. Interacts with IscU.

In terms of biological role, co-chaperone involved in the maturation of iron-sulfur cluster-containing proteins. Seems to help targeting proteins to be folded toward HscA. In Yersinia pseudotuberculosis serotype O:1b (strain IP 31758), this protein is Co-chaperone protein HscB.